A 528-amino-acid chain; its full sequence is 4-nitrophenol 4-monooxygenase/4-nitrocatechol 2-monooxygenase, oxygenase component (528 aa).

100-104 (RPPAG) is a substrate binding site. Residues 153–155 (PMF), 159–162 (QFDR), and Thr-194 each bind FAD. 205 to 206 (GN) is a binding site for substrate. 461-464 (TMQR) lines the FAD pocket.

The protein belongs to the FADH(2)-utilizing monooxygenase family. In terms of assembly, the 4-NP/4-NCA monooxygenase is composed of an oxygenase component NpcA and a reductase component NpcB. It depends on FAD as a cofactor.

The enzyme catalyses 4-nitrophenol + NADH + O2 + H(+) = 4-nitrocatechol + NAD(+) + H2O. It catalyses the reaction 4-nitrocatechol + NADPH + O2 = 2-hydroxy-1,4-benzoquinone + nitrite + NADP(+) + H2O. The catalysed reaction is 4-nitrocatechol + NADH + O2 = 2-hydroxy-1,4-benzoquinone + nitrite + NAD(+) + H2O. The protein operates within aromatic compound metabolism. It participates in xenobiotic degradation. Inhibited by methimazole. In terms of biological role, involved in the degradation of para-nitrophenol (4-NP). Catalyzes both the initial hydroxylation of 4-NP to produce 4-nitrocatechol (4-NCA) and the subsequent oxidative release of the nitro group from 4-NCA to produce 2-hydroxy-1,4-benzoquinone. It can also use 4-nitroresorcinol as substrate with a rate of nitrite release similar to that observed with the two physiological substrates, 4-PN and 4-NCA. In Rhodococcus opacus (Nocardia opaca), this protein is 4-nitrophenol 4-monooxygenase/4-nitrocatechol 2-monooxygenase, oxygenase component (npcA).